The sequence spans 388 residues: 1-deoxy-D-xylulose 5-phosphate reductoisomerase (388 aa).

The NADPH site is built by Thr-10, Gly-11, Ser-12, Ile-13, Asn-37, and Asn-121. Lys-122 lines the 1-deoxy-D-xylulose 5-phosphate pocket. NADPH is bound at residue Glu-123. Asp-147 contributes to the Mn(2+) binding site. Positions 148, 149, 173, and 196 each coordinate 1-deoxy-D-xylulose 5-phosphate. Glu-149 serves as a coordination point for Mn(2+). Gly-202 lines the NADPH pocket. 4 residues coordinate 1-deoxy-D-xylulose 5-phosphate: Ser-209, Asn-214, Lys-215, and Glu-218. Residue Glu-218 participates in Mn(2+) binding.

It belongs to the DXR family. It depends on Mg(2+) as a cofactor. The cofactor is Mn(2+).

It carries out the reaction 2-C-methyl-D-erythritol 4-phosphate + NADP(+) = 1-deoxy-D-xylulose 5-phosphate + NADPH + H(+). It functions in the pathway isoprenoid biosynthesis; isopentenyl diphosphate biosynthesis via DXP pathway; isopentenyl diphosphate from 1-deoxy-D-xylulose 5-phosphate: step 1/6. Functionally, catalyzes the NADPH-dependent rearrangement and reduction of 1-deoxy-D-xylulose-5-phosphate (DXP) to 2-C-methyl-D-erythritol 4-phosphate (MEP). The sequence is that of 1-deoxy-D-xylulose 5-phosphate reductoisomerase from Lachnoclostridium phytofermentans (strain ATCC 700394 / DSM 18823 / ISDg) (Clostridium phytofermentans).